A 639-amino-acid polypeptide reads, in one-letter code: Methyl-accepting chemotaxis protein McpS (639 aa).

Topologically, residues 1-13 are cytoplasmic; the sequence is MNSWFANISVNLK. Residues 14–34 form a helical membrane-spanning segment; that stretch reads LGLGFGLVLVLTGLLALTGWT. Over 35 to 288 the chain is Periplasmic; that stretch reads SLGSLIDRSN…RDIESTQARS (254 aa). One can recognise an HBM domain in the interval 41 to 283; sequence DRSNWMGDIG…IQLERRDIES (243 aa). Residue 60 to 65 participates in (S)-malate binding; it reads RIARLQ. Residue 60–65 participates in succinate binding; it reads RIARLQ. 4 residues coordinate acetate: aspartate 138, arginine 183, arginine 187, and tyrosine 236. Positions 191–245 form a coiled coil; the sequence is AENSSANEQAALRQLDAALADTDNLKRQLPSEDARLQQFENAVLAYRDAVRQFRD. Residues arginine 254 and threonine 258 each coordinate (S)-malate. Residue arginine 254 participates in succinate binding. A helical transmembrane segment spans residues 289-309; it reads LQAIATLLALLVGVLAAVLIT. An HAMP domain is found at 310–362; that stretch reads RQITRPLQDTLVAVEKIASGDLTQHMRVTRRDELGVLQQGIARMGTTLRELIS. Residues 310–639 are Cytoplasmic-facing; sequence RQITRPLQDT…LQTLVSQFRV (330 aa). The Methyl-accepting transducer domain occupies 367-603; sequence GVTQIASAAE…EISRSILNVR (237 aa).

Belongs to the methyl-accepting chemotaxis (MCP) protein family. As to quaternary structure, homodimer. Exists as a mixture of monomers and dimers in solution. Ligand binding stabilizes the dimeric form. Methylated by CheR2.

It is found in the cell membrane. With respect to regulation, binding of citrate to the ligand-binding domain reduces the chemotaxis towards the strong attractants such as malate and succinate. However, in physiologically relevant niches, citrate is mostly complexed with magnesium or calcium ions, and does not bind McpS. Functionally, chemotactic-signal transducers respond to changes in the concentration of attractants and repellents in the environment, transduce a signal from the outside to the inside of the cell, and facilitate sensory adaptation through the variation of the level of methylation. McpS is a specific chemoreceptor for 6 tricarboxylic acid (TCA) cycle intermediates (succinate, fumarate, malate, oxaloacetate, citrate and isocitrate), butyrate and acetate. Malate, succinate, fumarate and oxaloacetate cause the strongest chemotactic response. This Pseudomonas putida (strain ATCC 47054 / DSM 6125 / CFBP 8728 / NCIMB 11950 / KT2440) protein is Methyl-accepting chemotaxis protein McpS (mcpS).